Reading from the N-terminus, the 599-residue chain is MVIEHIRNFSIIAHIDHGKSTLADRLLEFTGTVSAREKQDQFLDKMDLERERGITIKAQTVRLNYRADDGKDYILNLIDTPGHVDFTYEVSRSLTACEGGLLVVDASQGVEAQTLANVYLALDANLEVFVVLNKIDLPAAEPERVKAEIEEIIGLDTHDAVLASAKEGIGTKDILEEIVKKIPPPKGDATKPMKALLFDSWYDQYQGVIILVRLVDGTVKKGDKIQLMSNRKSYEVLKAGVFSPEMRETPMLSAGEVGFIIAGIREVADAKVGDTVTLLHNPCDAALPGYKEVKPMVFSGLYPIDTSQYEQLRDALAKLKLNDSSFSYDPETSLALGFGFRCGFLGLLHMEIIQERLEREFNLELITTAPTVVYRVHGTDGSLTSIQSANQLPPTQEIAYVEEPFILASIHVPNDFVGGILALCEEKRGVQREIKYLTPTRVMVVYELPLNEVVLDFYDRLKSITKGYASLDYELLDYRQSELVRLNIMINGEVVDALSLIIHKDKAYYRGRELVSKMKELIPRQMFEIAIQAAVGTKVIARETVKAMRKDVLAKCYGGDITRKRKLLEKQKEGKKRMKNVGNVELPQEAFLAILKVEG.

Positions 4-186 (EHIRNFSIIA…EIVKKIPPPK (183 aa)) constitute a tr-type G domain. Residues 16–21 (DHGKST) and 133–136 (NKID) each bind GTP.

Belongs to the TRAFAC class translation factor GTPase superfamily. Classic translation factor GTPase family. LepA subfamily.

It is found in the cell inner membrane. The enzyme catalyses GTP + H2O = GDP + phosphate + H(+). In terms of biological role, required for accurate and efficient protein synthesis under certain stress conditions. May act as a fidelity factor of the translation reaction, by catalyzing a one-codon backward translocation of tRNAs on improperly translocated ribosomes. Back-translocation proceeds from a post-translocation (POST) complex to a pre-translocation (PRE) complex, thus giving elongation factor G a second chance to translocate the tRNAs correctly. Binds to ribosomes in a GTP-dependent manner. The protein is Elongation factor 4 of Citrifermentans bemidjiense (strain ATCC BAA-1014 / DSM 16622 / JCM 12645 / Bem) (Geobacter bemidjiensis).